Here is a 151-residue protein sequence, read N- to C-terminus: Deoxyuridine 5'-triphosphate nucleotidohydrolase (151 aa).

Substrate contacts are provided by residues 70–72 (RSG), Asn-83, 87–89 (LID), and Met-97.

Belongs to the dUTPase family. Mg(2+) serves as cofactor.

It carries out the reaction dUTP + H2O = dUMP + diphosphate + H(+). It functions in the pathway pyrimidine metabolism; dUMP biosynthesis; dUMP from dCTP (dUTP route): step 2/2. Functionally, this enzyme is involved in nucleotide metabolism: it produces dUMP, the immediate precursor of thymidine nucleotides and it decreases the intracellular concentration of dUTP so that uracil cannot be incorporated into DNA. The polypeptide is Deoxyuridine 5'-triphosphate nucleotidohydrolase (Pseudomonas entomophila (strain L48)).